The sequence spans 345 residues: Glycerol-3-phosphate dehydrogenase [NAD(P)+] (345 aa).

Positions 11, 12, 32, 33, and 106 each coordinate NADPH. Residues Lys106, Gly137, and Ser139 each coordinate sn-glycerol 3-phosphate. NADPH is bound at residue Ala141. Sn-glycerol 3-phosphate contacts are provided by Lys192, Asp245, Ser255, Arg256, and Asn257. Residue Lys192 is the Proton acceptor of the active site. Arg256 contacts NADPH. Residues Val280 and Glu282 each coordinate NADPH.

Belongs to the NAD-dependent glycerol-3-phosphate dehydrogenase family.

It localises to the cytoplasm. The enzyme catalyses sn-glycerol 3-phosphate + NAD(+) = dihydroxyacetone phosphate + NADH + H(+). The catalysed reaction is sn-glycerol 3-phosphate + NADP(+) = dihydroxyacetone phosphate + NADPH + H(+). Its pathway is membrane lipid metabolism; glycerophospholipid metabolism. Functionally, catalyzes the reduction of the glycolytic intermediate dihydroxyacetone phosphate (DHAP) to sn-glycerol 3-phosphate (G3P), the key precursor for phospholipid synthesis. The sequence is that of Glycerol-3-phosphate dehydrogenase [NAD(P)+] from Bacillus pumilus (strain SAFR-032).